We begin with the raw amino-acid sequence, 332 residues long: Ferredoxin--NADP reductase (332 aa).

FAD-binding residues include Glu-35, Gln-43, Tyr-48, Val-88, Phe-122, Asp-286, and Ser-326.

This sequence belongs to the ferredoxin--NADP reductase type 2 family. Homodimer. Requires FAD as cofactor.

It catalyses the reaction 2 reduced [2Fe-2S]-[ferredoxin] + NADP(+) + H(+) = 2 oxidized [2Fe-2S]-[ferredoxin] + NADPH. This is Ferredoxin--NADP reductase from Limosilactobacillus reuteri (strain DSM 20016) (Lactobacillus reuteri).